The chain runs to 257 residues: Phosphonates import ATP-binding protein PhnC (257 aa).

An ABC transporter domain is found at 2 to 246; that stretch reads IEFRNVSKVY…KFAEIYGDVA (245 aa). An ATP-binding site is contributed by 35-42; it reads GLSGAGKS.

This sequence belongs to the ABC transporter superfamily. Phosphonates importer (TC 3.A.1.9.1) family. As to quaternary structure, the complex is composed of two ATP-binding proteins (PhnC), two transmembrane proteins (PhnE) and a solute-binding protein (PhnD).

It localises to the cell membrane. It carries out the reaction phosphonate(out) + ATP + H2O = phosphonate(in) + ADP + phosphate + H(+). Part of the ABC transporter complex PhnCDE involved in phosphonates import. Responsible for energy coupling to the transport system. The chain is Phosphonates import ATP-binding protein PhnC from Bacillus cereus (strain ATCC 10987 / NRS 248).